A 509-amino-acid chain; its full sequence is Maturase K (509 aa).

It belongs to the intron maturase 2 family. MatK subfamily.

The protein localises to the plastid. It localises to the chloroplast. Usually encoded in the trnK tRNA gene intron. Probably assists in splicing its own and other chloroplast group II introns. The protein is Maturase K of Solanum lycopersicum (Tomato).